We begin with the raw amino-acid sequence, 101 residues long: Urease subunit beta (101 aa).

The protein belongs to the urease beta subunit family. In terms of assembly, heterotrimer of UreA (gamma), UreB (beta) and UreC (alpha) subunits. Three heterotrimers associate to form the active enzyme.

It is found in the cytoplasm. The catalysed reaction is urea + 2 H2O + H(+) = hydrogencarbonate + 2 NH4(+). It functions in the pathway nitrogen metabolism; urea degradation; CO(2) and NH(3) from urea (urease route): step 1/1. In Burkholderia orbicola (strain AU 1054), this protein is Urease subunit beta.